A 450-amino-acid polypeptide reads, in one-letter code: Bifunctional protein GlmU (450 aa).

A pyrophosphorylase region spans residues 1-226; that stretch reads MLAVAVLAAG…PDEVNGINNR (226 aa). UDP-N-acetyl-alpha-D-glucosamine-binding positions include 7–10, K21, Q73, and 78–79; these read LAAG and GT. D103 is a Mg(2+) binding site. The UDP-N-acetyl-alpha-D-glucosamine site is built by G140, E155, N170, and N224. Residue N224 coordinates Mg(2+). The interval 227 to 247 is linker; the sequence is QQLAQCETMLQERLRHHWMAE. Residues 248-450 form an N-acetyltransferase region; that stretch reads GVTFVDPASC…IKENWAGPQG (203 aa). Residues R329 and K347 each coordinate UDP-N-acetyl-alpha-D-glucosamine. H359 serves as the catalytic Proton acceptor. The UDP-N-acetyl-alpha-D-glucosamine site is built by Y362 and N373. Acetyl-CoA contacts are provided by residues A376, 382–383, A419, and R436; that span reads NY.

It in the N-terminal section; belongs to the N-acetylglucosamine-1-phosphate uridyltransferase family. In the C-terminal section; belongs to the transferase hexapeptide repeat family. As to quaternary structure, homotrimer. Requires Mg(2+) as cofactor.

The protein localises to the cytoplasm. It catalyses the reaction alpha-D-glucosamine 1-phosphate + acetyl-CoA = N-acetyl-alpha-D-glucosamine 1-phosphate + CoA + H(+). It carries out the reaction N-acetyl-alpha-D-glucosamine 1-phosphate + UTP + H(+) = UDP-N-acetyl-alpha-D-glucosamine + diphosphate. The protein operates within nucleotide-sugar biosynthesis; UDP-N-acetyl-alpha-D-glucosamine biosynthesis; N-acetyl-alpha-D-glucosamine 1-phosphate from alpha-D-glucosamine 6-phosphate (route II): step 2/2. It functions in the pathway nucleotide-sugar biosynthesis; UDP-N-acetyl-alpha-D-glucosamine biosynthesis; UDP-N-acetyl-alpha-D-glucosamine from N-acetyl-alpha-D-glucosamine 1-phosphate: step 1/1. It participates in bacterial outer membrane biogenesis; LPS lipid A biosynthesis. Catalyzes the last two sequential reactions in the de novo biosynthetic pathway for UDP-N-acetylglucosamine (UDP-GlcNAc). The C-terminal domain catalyzes the transfer of acetyl group from acetyl coenzyme A to glucosamine-1-phosphate (GlcN-1-P) to produce N-acetylglucosamine-1-phosphate (GlcNAc-1-P), which is converted into UDP-GlcNAc by the transfer of uridine 5-monophosphate (from uridine 5-triphosphate), a reaction catalyzed by the N-terminal domain. This is Bifunctional protein GlmU from Synechococcus sp. (strain RCC307).